We begin with the raw amino-acid sequence, 313 residues long: Protochlorophyllide reductase (313 aa).

The protein belongs to the short-chain dehydrogenases/reductases (SDR) family. POR subfamily.

The protein resides in the plastid. Its subcellular location is the chloroplast. The enzyme catalyses chlorophyllide a + NADP(+) = protochlorophyllide a + NADPH + H(+). Its pathway is porphyrin-containing compound metabolism; chlorophyll biosynthesis. In terms of biological role, phototransformation of protochlorophyllide (Pchlide) to chlorophyllide (Chlide). In Avena sativa (Oat), this protein is Protochlorophyllide reductase.